The sequence spans 81 residues: MKTLLLTLVVVTIVCLDLGYTLKCNKLVPLFYKTCPAGKNLCYKMFMVATPKVPVKRGCIDVCPKNSLLVKYVCCNTDRCN.

The N-terminal stretch at Met-1–Thr-21 is a signal peptide. 4 disulfides stabilise this stretch: Cys-24/Cys-42, Cys-35/Cys-59, Cys-63/Cys-74, and Cys-75/Cys-80.

The protein belongs to the three-finger toxin family. Short-chain subfamily. Type IA cytotoxin sub-subfamily. In terms of assembly, monomer in solution; Homodimer and oligomer in the presence of negatively charged lipids forming a pore with a size ranging between 20 and 30 Angstroms. As to expression, expressed by the venom gland.

The protein resides in the secreted. Its subcellular location is the target cell membrane. In terms of biological role, shows cytolytic activity on many different cells by forming pore in lipid membranes. In vivo, increases heart rate or kills the animal by cardiac arrest. In addition, it binds to heparin with high affinity, interacts with Kv channel-interacting protein 1 (KCNIP1) in a calcium-independent manner, and binds to integrin alpha-V/beta-3 (ITGAV/ITGB3) with moderate affinity. The polypeptide is Cytotoxin 3a (Naja atra (Chinese cobra)).